The following is a 199-amino-acid chain: Adenine phosphoribosyltransferase (199 aa).

It belongs to the purine/pyrimidine phosphoribosyltransferase family. Homodimer.

The protein localises to the cytoplasm. The catalysed reaction is AMP + diphosphate = 5-phospho-alpha-D-ribose 1-diphosphate + adenine. Its pathway is purine metabolism; AMP biosynthesis via salvage pathway; AMP from adenine: step 1/1. Functionally, catalyzes a salvage reaction resulting in the formation of AMP, that is energically less costly than de novo synthesis. This is Adenine phosphoribosyltransferase from Rhodopseudomonas palustris (strain BisB18).